The primary structure comprises 529 residues: DEP domain-containing protein 1B (529 aa).

One can recognise a DEP domain in the interval 24 to 108; sequence FRAKMPLRKH…DNRHLYRFPP (85 aa). A Phosphoserine modification is found at Ser160. Residues 201-393 form the Rho-GAP domain; it reads DSLEEVLDVK…FLMDNYQEIL (193 aa). Ser436 is modified (phosphoserine).

The chain is DEP domain-containing protein 1B (DEPDC1B) from Homo sapiens (Human).